The primary structure comprises 126 residues: Fluoride-specific ion channel FluC (126 aa).

4 helical membrane-spanning segments follow: residues 5-25, 35-55, 68-88, and 99-119; these read VLAV…LGLW, WGTL…MAFF, FAVT…LEMF, and ALVG…LGFL. 2 residues coordinate Na(+): Gly-75 and Thr-78.

The protein belongs to the fluoride channel Fluc/FEX (TC 1.A.43) family.

Its subcellular location is the cell inner membrane. It carries out the reaction fluoride(in) = fluoride(out). Na(+) is not transported, but it plays an essential structural role and its presence is essential for fluoride channel function. In terms of biological role, fluoride-specific ion channel. Important for reducing fluoride concentration in the cell, thus reducing its toxicity. The protein is Fluoride-specific ion channel FluC of Marinobacter nauticus (strain ATCC 700491 / DSM 11845 / VT8) (Marinobacter aquaeolei).